Here is a 354-residue protein sequence, read N- to C-terminus: Guanine nucleotide-binding protein G(i) subunit alpha-3 (354 aa).

The N-myristoyl glycine moiety is linked to residue G2. C3 carries S-palmitoyl cysteine lipidation. Positions 32 to 354 (KEVKLLLLGA…KNNLKECGLY (323 aa)) constitute a G-alpha domain. The segment at 35–48 (KLLLLGAGESGKST) is G1 motif. GTP is bound by residues G42, E43, S44, G45, K46, S47, T48, D150, S151, L175, R176, T177, R178, V179, K180, T181, V201, G203, N269, K270, D272, L273, C325, A326, and T327. A Mg(2+)-binding site is contributed by S47. The tract at residues 173-181 (DVLRTRVKT) is G2 motif. T181 lines the Mg(2+) pocket. Residues 196-205 (FKMFDVGGQR) form a G3 motif region. The segment at 265 to 272 (ILFLNKKD) is G4 motif. A G5 motif region spans residues 324–329 (TCATDT).

Belongs to the G-alpha family. G(i/o/t/z) subfamily. In terms of assembly, heterotrimeric G proteins are composed of 3 units; alpha, beta and gamma. The alpha subunit contains the guanine nucleotide binding site. GTP binding causes dissociation of the heterotrimer, liberating the individual subunits so that they can interact with downstream effector proteins. Forms a complex with CCDC88A/GIV and EGFR which leads to enhanced EGFR signaling and triggering of cell migration; ligand stimulation is required for recruitment of GNAI3 to the complex. Interacts (inactive GDP-bound form) with CCDC88A/GIV (via GBA motif); the interaction leads to activation of GNAI3. Interacts (inactive GDP-bound form) with CCDC88C/DAPLE (via GBA motif); the interaction leads to activation of GNAI3. Interacts (inactive GDP-bound form) with NUCB1 (via GBA motif) and NUCB2 (via GBA motif); the interaction leads to activation of GNAI3. Interacts (inactive GDP-bound form) with PLCD4 (via GBA motif); the interaction leads to activation of GNAI3. Interacts with INSR; the interaction is probably mediated by CCDC88A/GIV. Interacts with GPSM1. Interacts (GDP-bound form) with GPSM2 (via GoLoco domains). Does not interact with RGS2. Interacts with RGS8 and RGS10; this strongly enhances the intrinsic GTPase activity. Interacts with RGS12. Interacts with RGS16; this strongly enhances the intrinsic GTPase activity. Interacts (via active GTP- or inactive GDP-bound form) with RGS14. Interacts (via active GTP-bound form) with TRPC5 (via ANK repeats) in a homotetrameric ion channel; the interaction is direct and activates the channel activity. Ubiquitous.

Its subcellular location is the cytoplasm. It localises to the cell membrane. The protein resides in the cytoskeleton. It is found in the microtubule organizing center. The protein localises to the centrosome. Heterotrimeric guanine nucleotide-binding proteins (G proteins) function as transducers downstream of G protein-coupled receptors (GPCRs) in numerous signaling cascades. The alpha chain contains the guanine nucleotide binding site and alternates between an active, GTP-bound state and an inactive, GDP-bound state. Signaling by an activated GPCR promotes GDP release and GTP binding. The alpha subunit has a low GTPase activity that converts bound GTP to GDP, thereby terminating the signal. Both GDP release and GTP hydrolysis are modulated by numerous regulatory proteins. Signaling is mediated via effector proteins, such as adenylate cyclase. Inhibits adenylate cyclase activity, leading to decreased intracellular cAMP levels. Stimulates the activity of receptor-regulated K(+) channels. The active GTP-bound form prevents the association of RGS14 with centrosomes and is required for the translocation of RGS14 from the cytoplasm to the plasma membrane. May play a role in cell division. The active GTP-bound form activates the calcium permeant TRPC5 ion channels. This chain is Guanine nucleotide-binding protein G(i) subunit alpha-3 (Gnai3), found in Rattus norvegicus (Rat).